We begin with the raw amino-acid sequence, 396 residues long: S-arrestin (396 aa).

Positions 375–386 (ARDPLKGELQAE) are enriched in basic and acidic residues. The segment at 375 to 396 (ARDPLKGELQAEEKEEEEDDEK) is disordered. Over residues 387–396 (EKEEEEDDEK) the composition is skewed to acidic residues.

Belongs to the arrestin family. Interacts with RHO (via the phosphorylated C-terminus).

The protein resides in the cell projection. The protein localises to the cilium. It localises to the photoreceptor outer segment. It is found in the membrane. Its function is as follows. Binds to photoactivated, phosphorylated RHO and terminates RHO signaling via G-proteins by competing with G-proteins for the same binding site on RHO. May play a role in preventing light-dependent degeneration of retinal photoreceptor cells. The chain is S-arrestin (sag) from Xenopus laevis (African clawed frog).